The primary structure comprises 273 residues: Putative phosphoenolpyruvate synthase regulatory protein (273 aa).

153–160 lines the ADP pocket; sequence GVSRSGKT.

The protein belongs to the pyruvate, phosphate/water dikinase regulatory protein family. PSRP subfamily.

It carries out the reaction [pyruvate, water dikinase] + ADP = [pyruvate, water dikinase]-phosphate + AMP + H(+). It catalyses the reaction [pyruvate, water dikinase]-phosphate + phosphate + H(+) = [pyruvate, water dikinase] + diphosphate. Its function is as follows. Bifunctional serine/threonine kinase and phosphorylase involved in the regulation of the phosphoenolpyruvate synthase (PEPS) by catalyzing its phosphorylation/dephosphorylation. The sequence is that of Putative phosphoenolpyruvate synthase regulatory protein from Polaromonas naphthalenivorans (strain CJ2).